Here is an 89-residue protein sequence, read N- to C-terminus: HssA/B-like protein 21 (89 aa).

It belongs to the hssA/B family.

The polypeptide is HssA/B-like protein 21 (hssl21) (Dictyostelium discoideum (Social amoeba)).